The primary structure comprises 311 residues: Uridine phosphorylase 1 (311 aa).

Phosphate contacts are provided by residues Gly-61, Arg-95, and 139 to 142 (RIGT). Residues 143 to 144 (SG) and 218 to 220 (QGR) contribute to the uridine site.

It belongs to the PNP/UDP phosphorylase family. As to quaternary structure, homodimer. The N-terminus is blocked.

The catalysed reaction is uridine + phosphate = alpha-D-ribose 1-phosphate + uracil. It carries out the reaction 2'-deoxyuridine + phosphate = 2-deoxy-alpha-D-ribose 1-phosphate + uracil. It participates in pyrimidine metabolism; UMP biosynthesis via salvage pathway; uracil from uridine (phosphorylase route): step 1/1. Strongly inhibited by 2,2'-anhydro-5-ethyluridine, a competitive inhibitor. Functionally, catalyzes the reversible phosphorylytic cleavage of uridine to uracil and ribose-1-phosphate which can then be utilized as carbon and energy sources or in the rescue of pyrimidine bases for nucleotide synthesis. Shows broad substrate specificity and can also accept deoxyuridine and other analogous compounds. The protein is Uridine phosphorylase 1 of Mus musculus (Mouse).